Consider the following 175-residue polypeptide: Co-chaperone protein HscB homolog (175 aa).

Residues 7 to 79 (SHFALFNLPE…LKRARYLLSL (73 aa)) form the J domain.

This sequence belongs to the HscB family. As to quaternary structure, interacts with HscA and stimulates its ATPase activity.

Its function is as follows. Co-chaperone involved in the maturation of iron-sulfur cluster-containing proteins. Seems to help targeting proteins to be folded toward HscA. The protein is Co-chaperone protein HscB homolog of Paraburkholderia phymatum (strain DSM 17167 / CIP 108236 / LMG 21445 / STM815) (Burkholderia phymatum).